Consider the following 306-residue polypeptide: Mitochondrial substrate carrier family protein ucpA (306 aa).

Residues 1-15 lie on the Mitochondrial intermembrane side of the membrane; the sequence is MSVNLNNNKNNKNKV. Solcar repeat units follow at residues 13–103, 112–204, and 211–301; these read NKVA…ISNA, YFFL…CKNL, and DGIY…FKKL. The helical transmembrane segment at 16-36 threads the bilayer; the sequence is AIGFISGSLASICATTVTNPI. Topologically, residues 37-83 are mitochondrial matrix; that stretch reads ELVKTRLQLQGELQLSQRIYNGVWDAFKQIYKTEGIRGLQSGLIPAY. A helical membrane pass occupies residues 84–103; that stretch reads FSQATMQGIRLGSFDLISNA. Residues 104–117 lie on the Mitochondrial intermembrane side of the membrane; that stretch reads LGAKPNQDYFFLKN. The chain crosses the membrane as a helical span at residues 118-138; it reads LLAGATAGAIGAAAGSPFDLV. Residues 139–174 lie on the Mitochondrial matrix side of the membrane; it reads KVRMQAANMYKNDPQFVGYSSSFAAFKQIIQKEGFK. Residues 175–195 traverse the membrane as a helical segment; the sequence is GLTRGMLTSAQRTAVGSAIQL. The Mitochondrial intermembrane segment spans residues 196 to 211; the sequence is STYGSCKNLVLNFVDD. Residues 212 to 232 form a helical membrane-spanning segment; it reads GIYAYIISSMVAGFIVTFGMN. The Mitochondrial matrix segment spans residues 233–276; the sequence is PFDVARTRLYFQGKGNSHGEIYKGLMDCVYKTVKKEGFGAVYKG. Residues 277–295 traverse the membrane as a helical segment; the sequence is FWAHYLRLGPHTILTLVFW. At 296–306 the chain is on the mitochondrial intermembrane side; it reads EQFKKLFSGEL.

It belongs to the mitochondrial carrier (TC 2.A.29) family.

The protein localises to the mitochondrion inner membrane. Functionally, mitochondrial solute carriers shuttle metabolites, nucleotides, and cofactors through the mitochondrial inner membrane. Transports oxaloacetate and sulfate. The sequence is that of Mitochondrial substrate carrier family protein ucpA (ucpA) from Dictyostelium discoideum (Social amoeba).